Consider the following 573-residue polypeptide: Acetolactate synthase large subunit (573 aa).

E51 contributes to the thiamine diphosphate binding site. FAD contacts are provided by residues R153, 261–282 (HGTLEANTAMHESDLILGIGVR), and 304–323 (DIDPTSISKNVPVAIPIVGN). Residues 396-476 (QHQMFAALHY…VVIICLNNHF (81 aa)) form a thiamine pyrophosphate binding region. The Mg(2+) site is built by D447 and N474.

This sequence belongs to the TPP enzyme family. In terms of assembly, dimer of large and small chains. It depends on Mg(2+) as a cofactor. Thiamine diphosphate is required as a cofactor.

The catalysed reaction is 2 pyruvate + H(+) = (2S)-2-acetolactate + CO2. Its pathway is amino-acid biosynthesis; L-isoleucine biosynthesis; L-isoleucine from 2-oxobutanoate: step 1/4. The protein operates within amino-acid biosynthesis; L-valine biosynthesis; L-valine from pyruvate: step 1/4. The sequence is that of Acetolactate synthase large subunit (ilvI) from Haemophilus influenzae (strain ATCC 51907 / DSM 11121 / KW20 / Rd).